A 160-amino-acid polypeptide reads, in one-letter code: Transcription elongation factor GreA (160 aa).

A coiled-coil region spans residues 4–70 (QKQYPMTQEG…IEQDIQRIEH (67 aa)).

This sequence belongs to the GreA/GreB family.

Necessary for efficient RNA polymerase transcription elongation past template-encoded arresting sites. The arresting sites in DNA have the property of trapping a certain fraction of elongating RNA polymerases that pass through, resulting in locked ternary complexes. Cleavage of the nascent transcript by cleavage factors such as GreA or GreB allows the resumption of elongation from the new 3'terminus. GreA releases sequences of 2 to 3 nucleotides. In Staphylococcus carnosus (strain TM300), this protein is Transcription elongation factor GreA.